Reading from the N-terminus, the 24-residue chain is Lactadherin (24 aa).

The protein resides in the membrane. It is found in the secreted. Its subcellular location is the cytoplasmic vesicle. It localises to the secretory vesicle. The protein localises to the acrosome membrane. Its function is as follows. Specific ligand for the alpha-v/beta-3 and alpha-v/beta-5 receptors. Also binds to phosphatidylserine-enriched cell surfaces in a receptor-independent manner. Zona pellucida-binding protein which may play a role in gamete interaction. Contributes to phagocytic removal of apoptotic cells in many tissues. Plays an important role in the maintenance of intestinal epithelial homeostasis and the promotion of mucosal healing. Promotes VEGF-dependent neovascularization. In Equus asinus (Donkey), this protein is Lactadherin.